The sequence spans 332 residues: Isopentenyl phosphate kinase (332 aa).

Position 1 is an N-acetylmethionine (Met-1). Residue 18-22 participates in ATP binding; the sequence is KLGGA. Ala-96 is a binding site for substrate. Residue Gly-97 coordinates ATP. Substrate-binding residues include His-101 and Gly-202. Residues Asp-223, 228–233, Gly-279, and Lys-283 contribute to the ATP site; that span reads YDRPPS.

Belongs to the isopentenyl phosphate kinase family.

Its subcellular location is the cytoplasm. It localises to the cytosol. It catalyses the reaction isopentenyl phosphate + ATP = isopentenyl diphosphate + ADP. Catalyzes the formation of isopentenyl diphosphate (IPP), the universal five-carbon isoprenoid building block of all natural isoprenoids. Acts in parallel with the mevalonate (MVA) pathway and plays an important role in regulating the formation of both MVA and methylerythritol phosphate (MEP) pathway-derived terpenoid compounds by controlling the ratio of isopentenyl phosphate (IP) and dimethylallyl phosphate (DMAP) to isopentenyl diphosphate (IPP) and dimethylallyl diphosphate (DMAPP). Controls the levels of IP and DMAP that are competitive inhibitors of the farnesyl diphosphate synthase. Regulates the production of farnesyl diphosphate-derived terpenoids in the cytosol, and geranyl diphosphate-derived compounds in plastids. This Arabidopsis thaliana (Mouse-ear cress) protein is Isopentenyl phosphate kinase.